Reading from the N-terminus, the 160-residue chain is UPF0225 protein PputW619_1140 (160 aa).

It belongs to the UPF0225 family.

The chain is UPF0225 protein PputW619_1140 from Pseudomonas putida (strain W619).